The sequence spans 1793 residues: Protein TIC 214 (1793 aa).

The next 6 helical transmembrane spans lie at 11 to 31 (LVSL…YYGF), 64 to 84 (FITG…HIAL), 90 to 112 (ITVI…NFLN), 129 to 149 (IFFQ…SSIL), 172 to 192 (VGWL…LVWI), and 222 to 242 (IFLI…PPIY). Positions 1504–1524 (DIEEDYGESDSKKGGKDKNKK) are disordered.

This sequence belongs to the TIC214 family. In terms of assembly, part of the Tic complex.

The protein resides in the plastid. The protein localises to the chloroplast inner membrane. In terms of biological role, involved in protein precursor import into chloroplasts. May be part of an intermediate translocation complex acting as a protein-conducting channel at the inner envelope. This chain is Protein TIC 214, found in Lotus japonicus (Lotus corniculatus var. japonicus).